The chain runs to 325 residues: Protease HtpX homolog (325 aa).

A helical transmembrane segment spans residues 20 to 40 (IGYLLGGGGGMMIALVIAVAM). H130 serves as a coordination point for Zn(2+). E131 is a catalytic residue. H134 is a Zn(2+) binding site. The next 2 membrane-spanning stretches (helical) occupy residues 145–165 (IVAT…FLGG) and 173–193 (VMGV…AMIV). E202 is a binding site for Zn(2+). The interval 286–325 (SAAMTARAAAPSQNSGPWGQRSDNAGGNSNGGSRYRGPWS) is disordered. The segment covering 306–325 (RSDNAGGNSNGGSRYRGPWS) has biased composition (low complexity).

The protein belongs to the peptidase M48B family. Requires Zn(2+) as cofactor.

It localises to the cell inner membrane. The protein is Protease HtpX homolog of Brucella melitensis biotype 2 (strain ATCC 23457).